Reading from the N-terminus, the 165-residue chain is Growth arrest and DNA damage-inducible protein GADD45 alpha (165 aa).

Thr-2 carries the phosphothreonine modification.

It belongs to the GADD45 family. Interacts with AURKA, PCNA, GADD45GIP1 and MAPK14.

The protein localises to the nucleus. Might affect PCNA interaction with some CDK (cell division protein kinase) complexes; stimulates DNA excision repair in vitro and inhibits entry of cells into S phase. In T-cells, functions as a regulator of p38 MAPKs by inhibiting p88 phosphorylation and activity. This Rattus norvegicus (Rat) protein is Growth arrest and DNA damage-inducible protein GADD45 alpha (Gadd45a).